The following is a 183-amino-acid chain: Large ribosomal subunit protein uL22 (183 aa).

It belongs to the universal ribosomal protein uL22 family.

This chain is Large ribosomal subunit protein uL22 (RPL17), found in Podocoryna carnea (Hydrozoan).